The chain runs to 474 residues: 6-phospho-beta-galactosidase (474 aa).

Residues Gln19, His116, Asn159, Glu160, and Asn297 each contribute to the D-galactose 6-phosphate site. The Proton donor role is filled by Glu160. The active-site Nucleophile is Glu375. Residues Ser433, Trp434, Lys440, and Tyr442 each coordinate D-galactose 6-phosphate.

Belongs to the glycosyl hydrolase 1 family.

The enzyme catalyses a 6-phospho-beta-D-galactoside + H2O = D-galactose 6-phosphate + an alcohol. The protein operates within carbohydrate metabolism; lactose degradation; D-galactose 6-phosphate and beta-D-glucose from lactose 6-phosphate: step 1/1. In Lacticaseibacillus rhamnosus (Lactobacillus rhamnosus), this protein is 6-phospho-beta-galactosidase.